The chain runs to 133 residues: Small ribosomal subunit protein uS9 (133 aa).

The segment covering 97–113 (SKQELKSHGFLTRDPRK) has biased composition (basic and acidic residues). The segment at 97–133 (SKQELKSHGFLTRDPRKKERKKYGHKKARKSFQFSKR) is disordered. Residues 114–133 (KERKKYGHKKARKSFQFSKR) are compositionally biased toward basic residues.

Belongs to the universal ribosomal protein uS9 family.

The chain is Small ribosomal subunit protein uS9 from Chlamydia abortus (strain DSM 27085 / S26/3) (Chlamydophila abortus).